A 219-amino-acid polypeptide reads, in one-letter code: Thymidylate kinase (219 aa).

Residue 10–17 (GLEGAGKT) coordinates ATP.

Belongs to the thymidylate kinase family.

The catalysed reaction is dTMP + ATP = dTDP + ADP. Functionally, phosphorylation of dTMP to form dTDP in both de novo and salvage pathways of dTTP synthesis. In Pectobacterium carotovorum subsp. carotovorum (strain PC1), this protein is Thymidylate kinase.